The sequence spans 256 residues: MEFNWSEIALNTAKELEEKIMPLFGTKKAGENVGTNVSGDVTKYVDKVAEDIILKRLVPLGVNVVSEEVGTVDSGSDYTVVVDPLDGSYNFSAGIPIFAFSLGIFKGKKPVYGAIYEFLPENFYEAKPGKGAYLNGERIRVNEPEPGKEALSFYTRGRCLGLVKKVKRVRVLGAIAVELAYVARGSLDGVFDIRNYVRPTDVAAGVLLVREAGGIVTDERGREFEVKLSATEKTNIIAVANERLLNTILEAMKDEP.

E67, D83, L85, and D86 together coordinate Mg(2+). Substrate contacts are provided by residues 86–88 (DGS), R170, I175, and R194. D201 is a binding site for Mg(2+).

This sequence belongs to the inositol monophosphatase superfamily. FBPase class 4 family. Homodimer. Requires Mg(2+) as cofactor.

The catalysed reaction is beta-D-fructose 1,6-bisphosphate + H2O = beta-D-fructose 6-phosphate + phosphate. It catalyses the reaction a myo-inositol phosphate + H2O = myo-inositol + phosphate. Its function is as follows. Phosphatase with broad specificity; it can dephosphorylate fructose 1,6-bisphosphate (FBP) and inositol-1-phosphate (IMP). However, while possessing a high FBPase activity in vitro, does not participate in gluconeogenesis in vivo. This chain is Fructose-1,6-bisphosphatase/inositol-1-monophosphatase (suhB), found in Thermococcus kodakarensis (strain ATCC BAA-918 / JCM 12380 / KOD1) (Pyrococcus kodakaraensis (strain KOD1)).